Reading from the N-terminus, the 383-residue chain is MTSSPTVNLLDLDAQGLVAYCDSLGEKPFRARQLQRWIHQYNAADFDGMTDLAKSLREKLKGRATISMPGIVSDHISTDGTRKWLIDVGNSNAVETVYIPEETRGTLCVSSQAGCAVNCRFCSTGKQGFSRNLTTGEIIGQLRMAEFALRASRGVDGGRATGGDGKGERVVTNVVMMGMGEPLLNYDAVVPAMRLMLDDNAYGLSRRRVTLSTSGVVPMMDRLGADLPVALAVSLHAPSDPLRDMLVPLNKKYPLRELMAACQRYLKVAPRDFITFEYCMLDGVNDSEAQARELLAVTRDVPCKFNLIPFNPFPESGLIRSKPEQIKRFAQVLMDAGVITTVRKTRGDDIDAACGQLAGAVKDRTRLAERTGKAAKIIEVRAV.

Catalysis depends on E95, which acts as the Proton acceptor. Residues 101 to 349 enclose the Radical SAM core domain; sequence EETRGTLCVS…TTVRKTRGDD (249 aa). C108 and C354 are disulfide-bonded. [4Fe-4S] cluster-binding residues include C115, C119, and C122. S-adenosyl-L-methionine is bound by residues 180–181, S212, 234–236, and N311; these read GE and SLH. Catalysis depends on C354, which acts as the S-methylcysteine intermediate.

Belongs to the radical SAM superfamily. RlmN family. Requires [4Fe-4S] cluster as cofactor.

It is found in the cytoplasm. It catalyses the reaction adenosine(2503) in 23S rRNA + 2 reduced [2Fe-2S]-[ferredoxin] + 2 S-adenosyl-L-methionine = 2-methyladenosine(2503) in 23S rRNA + 5'-deoxyadenosine + L-methionine + 2 oxidized [2Fe-2S]-[ferredoxin] + S-adenosyl-L-homocysteine. It carries out the reaction adenosine(37) in tRNA + 2 reduced [2Fe-2S]-[ferredoxin] + 2 S-adenosyl-L-methionine = 2-methyladenosine(37) in tRNA + 5'-deoxyadenosine + L-methionine + 2 oxidized [2Fe-2S]-[ferredoxin] + S-adenosyl-L-homocysteine. Functionally, specifically methylates position 2 of adenine 2503 in 23S rRNA and position 2 of adenine 37 in tRNAs. m2A2503 modification seems to play a crucial role in the proofreading step occurring at the peptidyl transferase center and thus would serve to optimize ribosomal fidelity. In Paraburkholderia xenovorans (strain LB400), this protein is Dual-specificity RNA methyltransferase RlmN.